The sequence spans 437 residues: UDP-N-acetylmuramate--L-alanine ligase (437 aa).

Residue 114–120 (GTHGKTS) participates in ATP binding.

The protein belongs to the MurCDEF family.

Its subcellular location is the cytoplasm. It catalyses the reaction UDP-N-acetyl-alpha-D-muramate + L-alanine + ATP = UDP-N-acetyl-alpha-D-muramoyl-L-alanine + ADP + phosphate + H(+). It participates in cell wall biogenesis; peptidoglycan biosynthesis. Its function is as follows. Cell wall formation. This Lactobacillus gasseri (strain ATCC 33323 / DSM 20243 / BCRC 14619 / CIP 102991 / JCM 1131 / KCTC 3163 / NCIMB 11718 / NCTC 13722 / AM63) protein is UDP-N-acetylmuramate--L-alanine ligase.